The primary structure comprises 869 residues: Leucine--tRNA ligase (869 aa).

Positions 42-52 match the 'HIGH' region motif; that stretch reads PYPSGRLHMGH. The short motif at 620–624 is the 'KMSKS' region element; sequence KMSKS. Residue K623 coordinates ATP.

The protein belongs to the class-I aminoacyl-tRNA synthetase family.

It is found in the cytoplasm. The catalysed reaction is tRNA(Leu) + L-leucine + ATP = L-leucyl-tRNA(Leu) + AMP + diphosphate. In Hamiltonella defensa subsp. Acyrthosiphon pisum (strain 5AT), this protein is Leucine--tRNA ligase.